We begin with the raw amino-acid sequence, 372 residues long: NAD(P)H-quinone oxidoreductase subunit 1 (372 aa).

Helical transmembrane passes span 27–47 (VLWM…GVLV), 97–117 (FLFT…YLIV), 128–148 (VGAG…GLLM), 176–196 (LALA…IDIV), 204–224 (ILGW…IAAL), 254–274 (FALF…LVSI), 308–328 (ALGI…AILL), and 347–367 (FLLP…LTFP).

Belongs to the complex I subunit 1 family. As to quaternary structure, NDH-1 is composed of at least 11 different subunits.

It localises to the cellular thylakoid membrane. It carries out the reaction a plastoquinone + NADH + (n+1) H(+)(in) = a plastoquinol + NAD(+) + n H(+)(out). It catalyses the reaction a plastoquinone + NADPH + (n+1) H(+)(in) = a plastoquinol + NADP(+) + n H(+)(out). Functionally, NDH-1 shuttles electrons from an unknown electron donor, via FMN and iron-sulfur (Fe-S) centers, to quinones in the respiratory and/or the photosynthetic chain. The immediate electron acceptor for the enzyme in this species is believed to be plastoquinone. Couples the redox reaction to proton translocation, and thus conserves the redox energy in a proton gradient. This is NAD(P)H-quinone oxidoreductase subunit 1 from Synechococcus elongatus (strain ATCC 33912 / PCC 7942 / FACHB-805) (Anacystis nidulans R2).